Consider the following 395-residue polypeptide: Chorismate synthase (395 aa).

Residues arginine 40 and arginine 46 each coordinate NADP(+). Residues 135–137 (RAS) and 256–257 (QA) each bind FMN. Residues 272–283 (RRGSQAHDEMRP) show a composition bias toward basic and acidic residues. Residues 272–296 (RRGSQAHDEMRPGPDGILRSTNRAG) are disordered. FMN contacts are provided by residues glycine 300, 315–319 (KPIST), and arginine 341.

The protein belongs to the chorismate synthase family. As to quaternary structure, homotetramer. Requires FMNH2 as cofactor.

The catalysed reaction is 5-O-(1-carboxyvinyl)-3-phosphoshikimate = chorismate + phosphate. It participates in metabolic intermediate biosynthesis; chorismate biosynthesis; chorismate from D-erythrose 4-phosphate and phosphoenolpyruvate: step 7/7. Its function is as follows. Catalyzes the anti-1,4-elimination of the C-3 phosphate and the C-6 proR hydrogen from 5-enolpyruvylshikimate-3-phosphate (EPSP) to yield chorismate, which is the branch point compound that serves as the starting substrate for the three terminal pathways of aromatic amino acid biosynthesis. This reaction introduces a second double bond into the aromatic ring system. This Rhodococcus opacus (strain B4) protein is Chorismate synthase.